The sequence spans 312 residues: Nodulation protein D 2 (312 aa).

The HTH lysR-type domain occupies 6–63 (LDLNLLVALDALMTKRSVTAAARSINLSQPAMSAAIARLRTYFGDDLFTMRGRELIPT). Positions 23–42 (VTAAARSINLSQPAMSAAIA) form a DNA-binding region, H-T-H motif.

The protein belongs to the LysR transcriptional regulatory family.

Its function is as follows. Represses the expression of the nodABCIJ-nolO-noeI operon. The sequence is that of Nodulation protein D 2 (nodD2) from Sinorhizobium fredii (strain NBRC 101917 / NGR234).